Here is a 355-residue protein sequence, read N- to C-terminus: Arginine kinase (355 aa).

Residues T6–N90 enclose the Phosphagen kinase N-terminal domain. Residue G63 to Y67 coordinates substrate. The region spanning F118–L355 is the Phosphagen kinase C-terminal domain. ATP-binding positions include S121–R125 and H184. E224 is a substrate binding site. R228 is an ATP binding site. C270 contributes to the substrate binding site. ATP-binding positions include R279–H283 and R308–E313. Residue E313 coordinates substrate.

It belongs to the ATP:guanido phosphotransferase family.

The enzyme catalyses L-arginine + ATP = N(omega)-phospho-L-arginine + ADP + H(+). The polypeptide is Arginine kinase (ARGK) (Plodia interpunctella (Indianmeal moth)).